Consider the following 452-residue polypeptide: Bis(5'-adenosyl)-triphosphatase ENPP4 (452 aa).

Positions M1 to G15 are cleaved as a signal peptide. Over F16–A406 the chain is Extracellular. Residues D34 and T70 each coordinate Zn(2+). The active-site AMP-threonine intermediate is the T70. Substrate-binding residues include N91 and Y154. N-linked (GlcNAc...) asparagine glycans are attached at residues N155 and N166. D189, H193, D237, and H238 together coordinate Zn(2+). D189 contacts substrate. C254 and C287 form a disulfide bridge. N-linked (GlcNAc...) asparagine glycosylation occurs at N276. H335 is a Zn(2+) binding site. C393 and C400 form a disulfide bridge. The chain crosses the membrane as a helical span at residues I407 to M427. At Q428–G452 the chain is on the cytoplasmic side.

This sequence belongs to the nucleotide pyrophosphatase/phosphodiesterase family. It depends on Zn(2+) as a cofactor.

Its subcellular location is the cell membrane. It carries out the reaction P(1),P(3)-bis(5'-adenosyl) triphosphate + H2O = AMP + ADP + 2 H(+). In terms of biological role, hydrolyzes extracellular Ap3A into AMP and ADP, and Ap4A into AMP and ATP. Ap3A and Ap4A are diadenosine polyphosphates thought to induce proliferation of vascular smooth muscle cells. Acts as a procoagulant, mediating platelet aggregation at the site of nascent thrombus via release of ADP from Ap3A and activation of ADP receptors. In Pongo abelii (Sumatran orangutan), this protein is Bis(5'-adenosyl)-triphosphatase ENPP4 (ENPP4).